A 497-amino-acid polypeptide reads, in one-letter code: Glycerol kinase (497 aa).

ADP is bound at residue threonine 21. Residues threonine 21 and threonine 22 each contribute to the ATP site. Position 21 (threonine 21) interacts with sn-glycerol 3-phosphate. Position 25 (arginine 25) interacts with ADP. Residues arginine 88, glutamate 89, tyrosine 140, and aspartate 244 each contribute to the sn-glycerol 3-phosphate site. Glycerol is bound by residues arginine 88, glutamate 89, tyrosine 140, aspartate 244, and glutamine 245. Positions 266 and 309 each coordinate ADP. Threonine 266, glycine 309, glutamine 313, and glycine 410 together coordinate ATP. ADP contacts are provided by glycine 410 and asparagine 414.

The protein belongs to the FGGY kinase family.

The enzyme catalyses glycerol + ATP = sn-glycerol 3-phosphate + ADP + H(+). It functions in the pathway polyol metabolism; glycerol degradation via glycerol kinase pathway; sn-glycerol 3-phosphate from glycerol: step 1/1. With respect to regulation, inhibited by fructose 1,6-bisphosphate (FBP). Key enzyme in the regulation of glycerol uptake and metabolism. Catalyzes the phosphorylation of glycerol to yield sn-glycerol 3-phosphate. The protein is Glycerol kinase of Gloeobacter violaceus (strain ATCC 29082 / PCC 7421).